Reading from the N-terminus, the 536-residue chain is Glycine--tRNA ligase (536 aa).

The interval 56-67 is insert; it reads LVSPAGAPSTFE. The substrate site is built by Arg-106 and Glu-213. Residues 245 to 247, 255 to 260, and 333 to 334 each bind ATP; these read RNE, FRSREF, and EL. Residue 260–264 participates in substrate binding; it reads FEQME. The segment at 350-372 is insert; it reads EGKLDPATNPMTVELNEHGKPKH. Position 396 to 400 (396 to 400) interacts with substrate; sequence EPSAG. 400–403 is a binding site for ATP; it reads GADR.

This sequence belongs to the class-II aminoacyl-tRNA synthetase family. In terms of assembly, homodimer.

The protein localises to the cytoplasm. The enzyme catalyses tRNA(Gly) + glycine + ATP = glycyl-tRNA(Gly) + AMP + diphosphate. Catalyzes the attachment of glycine to tRNA(Gly). The polypeptide is Glycine--tRNA ligase (Rhodopirellula baltica (strain DSM 10527 / NCIMB 13988 / SH1)).